The sequence spans 102 residues: uncharacterized protein (102 aa).

The interval 77–102 (RKDGDEKSKPNSKDYASRPIRDHSKI) is disordered.

This is an uncharacterized protein from Microplitis demolitor (Parasitoid wasp).